The following is a 253-amino-acid chain: Polyprenal reductase (253 aa).

4 helical membrane-spanning segments follow: residues 18–38, 78–98, 123–143, and 200–220; these read LSFF…PEFL, FLSL…IIFG, HYLV…ISLY, and IIYS…VWVI.

Belongs to the steroid 5-alpha reductase family. Polyprenal reductase subfamily.

It localises to the endoplasmic reticulum membrane. It catalyses the reaction a di-trans,poly-cis-dolichal + NADP(+) = a di-trans,poly-cis-polyprenal + NADPH + H(+). It participates in protein modification; protein glycosylation. Its function is as follows. Plays a key role in early steps of protein N-linked glycosylation by being involved in the conversion of polyprenol into dolichol. Acts as a polyprenal reductase that mediates the reduction of polyprenal into dolichal in a NADP-dependent mechanism. Dolichols are required for the synthesis of dolichol-linked monosaccharides and the oligosaccharide precursor used for N-glycosylation. The polypeptide is Polyprenal reductase (Saccharomyces cerevisiae (strain ATCC 204508 / S288c) (Baker's yeast)).